The primary structure comprises 135 residues: Large-conductance mechanosensitive channel (135 aa).

2 helical membrane passes run 10–30 (FAMR…GAFG) and 76–96 (GSFI…FCVI).

The protein belongs to the MscL family. Homopentamer.

The protein resides in the cell inner membrane. Channel that opens in response to stretch forces in the membrane lipid bilayer. May participate in the regulation of osmotic pressure changes within the cell. This is Large-conductance mechanosensitive channel from Campylobacter concisus (strain 13826).